A 352-amino-acid polypeptide reads, in one-letter code: MPKFRILIVDDSVIVRRIINNILSESDWIEVVGVAPSGQIALAKIPQVNPDLIILDVEMPEIDGLETLKRIRQTYKQLPVIMFSAITQRGAIATLDALTLGANDYITKPANMGSKEKAIEYIRKQLIPKIQVFCHRKVSLTKHCLAPSMTSFQRKTSTQLLTLKLEIVAIGVSTGGPQALYQLLHKFPASFRVPIVIVQHMPPVFTTRLAERLSSQCKIPVHEAKDRDVIKSGEAWIAPGNYHIILVREGKQVRIQTIQTPPENSCRPAVDVLFRSVAKLYQGAVLGVVLTGMGQDGLHGCTSIREMGGQVLVQDQASSVIWGMPGMVANAGLADQILPLNKLAEEIIRRIG.

A Response regulatory domain is found at R5–R123. D56 is subject to 4-aspartylphosphate. The CheB-type methylesterase domain occupies E166 to G352. Catalysis depends on residues S173, H200, and D296.

It belongs to the CheB family. Phosphorylated by CheA. Phosphorylation of the N-terminal regulatory domain activates the methylesterase activity.

The protein resides in the cytoplasm. It carries out the reaction [protein]-L-glutamate 5-O-methyl ester + H2O = L-glutamyl-[protein] + methanol + H(+). The enzyme catalyses L-glutaminyl-[protein] + H2O = L-glutamyl-[protein] + NH4(+). Functionally, involved in chemotaxis. Part of a chemotaxis signal transduction system that modulates chemotaxis in response to various stimuli. Catalyzes the demethylation of specific methylglutamate residues introduced into the chemoreceptors (methyl-accepting chemotaxis proteins or MCP) by CheR. Also mediates the irreversible deamidation of specific glutamine residues to glutamic acid. The protein is Protein-glutamate methylesterase/protein-glutamine glutaminase of Trichodesmium erythraeum (strain IMS101).